Consider the following 360-residue polypeptide: Chorismate synthase (360 aa).

Arginine 47 lines the NADP(+) pocket. FMN-binding positions include arginine 124 to serine 126, asparagine 240 to alanine 241, glycine 285, lysine 300 to threonine 304, and arginine 326.

It belongs to the chorismate synthase family. Homotetramer. It depends on FMNH2 as a cofactor.

It carries out the reaction 5-O-(1-carboxyvinyl)-3-phosphoshikimate = chorismate + phosphate. Its pathway is metabolic intermediate biosynthesis; chorismate biosynthesis; chorismate from D-erythrose 4-phosphate and phosphoenolpyruvate: step 7/7. Catalyzes the anti-1,4-elimination of the C-3 phosphate and the C-6 proR hydrogen from 5-enolpyruvylshikimate-3-phosphate (EPSP) to yield chorismate, which is the branch point compound that serves as the starting substrate for the three terminal pathways of aromatic amino acid biosynthesis. This reaction introduces a second double bond into the aromatic ring system. The sequence is that of Chorismate synthase from Cytophaga hutchinsonii (strain ATCC 33406 / DSM 1761 / CIP 103989 / NBRC 15051 / NCIMB 9469 / D465).